A 345-amino-acid polypeptide reads, in one-letter code: MLPCFQLLRIGGGRGGDLYTFHPPAGAGCTYRLGHRADLCDVALRPQQEPGLISGIHAELHAEPRGDDWRVSLEDHSSQGTLVNNVRLPRGHRLELSDGDLLTFGPEGPPGTSPSEFYFMFQQVRVKPQDFAAITIPRSRGEARVGAGFRPMLPSQGAPQRPLSTFSPAPKATLILNSIGSLSKLRPQPLTFSPSWGGPKSLPVPAPPGEMGTTPSAPPQRNRRKSVHRVLAELDDESEPPENPPPVLMEPRKKLRVDKAPLTPTGNRRGRPRKYPVSAPMAPPAVGGGEPCAAPCCCLPQEETVAWVQCDGCDVWFHVACVGCSIQAAREADFRCPGCRAGIQT.

Residues Tyr31 to Leu88 form the FHA domain. Phosphoserine is present on Ser78. The interval Leu190–Val227 is disordered. A PHD-type zinc finger spans residues Ala293–Gly342. Cys296, Cys298, Cys310, Cys313, His318, Cys321, Cys336, and Cys339 together coordinate Zn(2+).

The protein localises to the nucleus. Potential transcription factor that may play a role in the regulation of genes involved in cell cycle G1/S transition. May bind to regulatory elements of genes, including the promoter of the transcription factor FOXO1. The sequence is that of Transcription factor 19 (TCF19) from Homo sapiens (Human).